A 203-amino-acid polypeptide reads, in one-letter code: Secreted phosphoprotein 24 (203 aa).

An N-terminal signal peptide occupies residues 1 to 23 (MEKMVMKMLVIFVFGMNHWTCTG). Disulfide bonds link cysteine 86–cysteine 97 and cysteine 110–cysteine 128. Residue serine 90 is modified to Phosphoserine. Serine 138, serine 139, serine 166, and serine 175 each carry phosphoserine. Positions 155–174 (NSHLLGLTPDRSRGEPLYER) are disordered. The segment covering 164–174 (DRSRGEPLYER) has biased composition (basic and acidic residues).

It belongs to the SPP2 family. In terms of processing, multiply phosphorylated at serine residues. Post-translationally, phosphorylation sites are present in the extracellular medium.

The protein resides in the secreted. Could coordinate an aspect of bone turnover. This is Secreted phosphoprotein 24 (SPP2) from Ovis aries (Sheep).